A 497-amino-acid chain; its full sequence is L-arabinose isomerase (497 aa).

Residues Glu306, Glu333, His349, and His448 each contribute to the Mn(2+) site.

Belongs to the arabinose isomerase family. Requires Mn(2+) as cofactor.

The enzyme catalyses beta-L-arabinopyranose = L-ribulose. It functions in the pathway carbohydrate degradation; L-arabinose degradation via L-ribulose; D-xylulose 5-phosphate from L-arabinose (bacterial route): step 1/3. Its function is as follows. Catalyzes the conversion of L-arabinose to L-ribulose. The polypeptide is L-arabinose isomerase (Vibrio parahaemolyticus serotype O3:K6 (strain RIMD 2210633)).